The sequence spans 155 residues: Probable adenylyl-sulfate kinase (155 aa).

9-16 (GPSGAGKT) is a binding site for ATP. Catalysis depends on serine 83, which acts as the Phosphoserine intermediate. Positions 134–155 (LDGEYEEPENPEVVVDTDKNDR) are disordered.

It belongs to the APS kinase family.

It carries out the reaction adenosine 5'-phosphosulfate + ATP = 3'-phosphoadenylyl sulfate + ADP + H(+). The protein operates within sulfur metabolism; hydrogen sulfide biosynthesis; sulfite from sulfate: step 2/3. Functionally, catalyzes the synthesis of activated sulfate. This Archaeoglobus fulgidus (strain ATCC 49558 / DSM 4304 / JCM 9628 / NBRC 100126 / VC-16) protein is Probable adenylyl-sulfate kinase (cysC).